Here is a 235-residue protein sequence, read N- to C-terminus: Sperm-associated microtubule inner protein 5 (235 aa).

In terms of assembly, microtubule inner protein component of sperm flagellar doublet microtubules. As to expression, expressed in sperm.

The protein resides in the cytoplasm. It is found in the cytoskeleton. The protein localises to the flagellum axoneme. Its subcellular location is the nucleus. Microtubule inner protein (MIP) part of the dynein-decorated doublet microtubules (DMTs) in flagellum axoneme. May serve to reinforce and thus stabilize the microtubule structure in the sperm flagella. The protein is Sperm-associated microtubule inner protein 5 (SPMIP5) of Bos taurus (Bovine).